The sequence spans 652 residues: Acetyl-coenzyme A synthetase (652 aa).

CoA-binding positions include 189–192 (RGDK) and Thr-311. ATP-binding positions include 387–389 (GEP), 411–416 (DTWWQT), Asp-500, and Arg-515. Ser-523 lines the CoA pocket. Position 526 (Arg-526) interacts with ATP. Mg(2+) contacts are provided by His-539 and Val-542. Arg-584 is a binding site for CoA. Lys-609 is modified (N6-acetyllysine).

The protein belongs to the ATP-dependent AMP-binding enzyme family. Mg(2+) serves as cofactor. In terms of processing, acetylated. Deacetylation by the SIR2-homolog deacetylase activates the enzyme.

It catalyses the reaction acetate + ATP + CoA = acetyl-CoA + AMP + diphosphate. Catalyzes the conversion of acetate into acetyl-CoA (AcCoA), an essential intermediate at the junction of anabolic and catabolic pathways. AcsA undergoes a two-step reaction. In the first half reaction, AcsA combines acetate with ATP to form acetyl-adenylate (AcAMP) intermediate. In the second half reaction, it can then transfer the acetyl group from AcAMP to the sulfhydryl group of CoA, forming the product AcCoA. This chain is Acetyl-coenzyme A synthetase, found in Bartonella bacilliformis (strain ATCC 35685 / KC583 / Herrer 020/F12,63).